Here is a 116-residue protein sequence, read N- to C-terminus: NADH-ubiquinone oxidoreductase chain 3 (116 aa).

A run of 3 helical transmembrane segments spans residues 3-23 (LITTIIAITITLSAVLATISF), 56-76 (FFLIAILFLLFDLEIALLLPL), and 85-105 (PALTLAWSAAVLALLTLGLIY).

This sequence belongs to the complex I subunit 3 family.

It is found in the mitochondrion membrane. It carries out the reaction a ubiquinone + NADH + 5 H(+)(in) = a ubiquinol + NAD(+) + 4 H(+)(out). In terms of biological role, core subunit of the mitochondrial membrane respiratory chain NADH dehydrogenase (Complex I) that is believed to belong to the minimal assembly required for catalysis. Complex I functions in the transfer of electrons from NADH to the respiratory chain. The immediate electron acceptor for the enzyme is believed to be ubiquinone. The polypeptide is NADH-ubiquinone oxidoreductase chain 3 (MT-ND3) (Salmo salar (Atlantic salmon)).